The following is a 444-amino-acid chain: C4-dicarboxylate transport protein (444 aa).

Transmembrane regions (helical) follow at residues 19–39 (HLYFQVIVAIIGGILLGHFYP), 55–75 (LVKMVIAPVIFLTVATGIAGM), 90–110 (IYFLCFSTLALVVGMLVSNIL), 161–181 (ILQVLFFSVLFGLALAMVGDL), 199–219 (LVAILMKAAPIGAFGAMAFTI), 230–250 (LAFLIGTFYLTSLLFVLVVLG), 343–363 (LLLVAMLSSKGAAGITGAGFI), and 366–386 (AATLSVVPSVPVAGMALILGI).

It belongs to the dicarboxylate/amino acid:cation symporter (DAACS) (TC 2.A.23) family.

It is found in the cell inner membrane. Its function is as follows. Responsible for the transport of dicarboxylates such as succinate, fumarate, and malate from the periplasm across the membrane. The polypeptide is C4-dicarboxylate transport protein (Allorhizobium ampelinum (strain ATCC BAA-846 / DSM 112012 / S4) (Agrobacterium vitis (strain S4))).